The chain runs to 60 residues: MAKGKENRIVITLECTEAKKEGKTVSRYTTTKNKKNTTERLILKKYNPNMQRHTLHKEIK.

Belongs to the bacterial ribosomal protein bL33 family.

The sequence is that of Large ribosomal subunit protein bL33 from Pelodictyon phaeoclathratiforme (strain DSM 5477 / BU-1).